Reading from the N-terminus, the 354-residue chain is Protein sex-lethal (354 aa).

The tract at residues 1 to 21 is disordered; sequence MYGNNNPGSNNNNGGYPPYGY. RRM domains are found at residues 125–203 and 211–291; these read TNLI…YARP and TNLY…LAEE.

Part of a complex containing fl(2)d, Sxl and vir. Part of a complex composed of at least mei-P26, bam, bgcn and Sxl; this complex is involved in translational repression of nanos mRNA. interacts with mei-p26. Interacts with nito. Interacts with Unr; cooperates with Unr to prevent translation of msl-2 transcripts. Interacts with how; promoting nuclear retention of msl-2 transcripts. Expressed in somatic tissues, but not in the pole cells, which are the precursors of the germline. Expressed in the anterior of the germarium.

It localises to the nucleus. The protein resides in the cytoplasm. In terms of biological role, sex determination switch protein, which controls sexual development and dosage compensation in females. Sxl protein is only active in females: it is inactive in males throughout development. Acts as a mRNA-binding protein, which specifically binds to a subset of pre-mRNAs and mRNAs and regulates their processing and/or translation. Binds nanos mRNA and is involved in bam-bgcn mediated repression of nanos mRNA translation. Promotes sexual development by controlling the female-specific alternative splicing of the transformer (tra) pre-mRNA: binds tightly to a characteristic uridine-rich polypyrimidine tract at the non-sex specific 3' splice site in one of the tra introns, preventing the general splicing factor U2AF from binding to this site and forcing it to bind to the female-specific 3' splice site. Acts as an inhibitor of dosage compensation in females by preventing production of msl-2 protein, an essential component of the MSL complex, the complex that mediates X-chromosome dosage compensation. Specifically binds to uridine stretches in both the 5'- and 3'-UTR of msl-2 transcripts. Sxl first acts at the splicing level by promoting retention of an intron in the 5' UTR of msl-2 pre-mRNA. The retained intron contains Sxl-binding sites that are required for subsequent steps of repression: after msl-2 mRNA export into the cytoplasm, Sxl coordinates its translational repression by targeting early steps of translation initiation. Together with how, Sxl also prevents production of msl-2 protein by preventing nuclear export of msl-2 transcripts. Embryo-specific product, which is expressed early only in female embryos and specifies female-adult specific splicing. The protein is Protein sex-lethal of Drosophila melanogaster (Fruit fly).